A 310-amino-acid polypeptide reads, in one-letter code: Putative S-adenosyl-L-methionine-dependent methyltransferase Mvan_1346 (310 aa).

Residues D136 and 165-166 (DL) contribute to the S-adenosyl-L-methionine site.

Belongs to the UPF0677 family.

In terms of biological role, exhibits S-adenosyl-L-methionine-dependent methyltransferase activity. In Mycolicibacterium vanbaalenii (strain DSM 7251 / JCM 13017 / BCRC 16820 / KCTC 9966 / NRRL B-24157 / PYR-1) (Mycobacterium vanbaalenii), this protein is Putative S-adenosyl-L-methionine-dependent methyltransferase Mvan_1346.